Reading from the N-terminus, the 881-residue chain is Valine--tRNA ligase (881 aa).

Positions Pro-49–His-59 match the 'HIGH' region motif. The short motif at Lys-526–Ser-530 is the 'KMSKS' region element. Lys-529 provides a ligand contact to ATP. The stretch at Leu-810–Lys-881 forms a coiled coil.

This sequence belongs to the class-I aminoacyl-tRNA synthetase family. ValS type 1 subfamily. In terms of assembly, monomer.

It is found in the cytoplasm. The catalysed reaction is tRNA(Val) + L-valine + ATP = L-valyl-tRNA(Val) + AMP + diphosphate. Catalyzes the attachment of valine to tRNA(Val). As ValRS can inadvertently accommodate and process structurally similar amino acids such as threonine, to avoid such errors, it has a 'posttransfer' editing activity that hydrolyzes mischarged Thr-tRNA(Val) in a tRNA-dependent manner. The sequence is that of Valine--tRNA ligase from Bacillus thuringiensis subsp. konkukian (strain 97-27).